Consider the following 359-residue polypeptide: Hyaluronan and proteoglycan link protein 3 (359 aa).

An N-terminal signal peptide occupies residues Met-1–Gly-17. The Ig-like V-type domain occupies Lys-48–Arg-164. Disulfide bonds link Cys-70-Cys-146, Cys-188-Cys-259, Cys-212-Cys-233, Cys-286-Cys-355, and Cys-311-Cys-332. 2 Link domains span residues Val-166–Ala-261 and Gly-266–Val-357.

Belongs to the HAPLN family.

Its subcellular location is the secreted. The protein resides in the extracellular space. It is found in the extracellular matrix. May function in hyaluronic acid binding. The polypeptide is Hyaluronan and proteoglycan link protein 3 (Hapln3) (Mus musculus (Mouse)).